The chain runs to 161 residues: Nucleotide-binding protein H16_A3060 (161 aa).

It belongs to the YajQ family.

Nucleotide-binding protein. The chain is Nucleotide-binding protein H16_A3060 from Cupriavidus necator (strain ATCC 17699 / DSM 428 / KCTC 22496 / NCIMB 10442 / H16 / Stanier 337) (Ralstonia eutropha).